Reading from the N-terminus, the 438-residue chain is Ribosomal protein uS12 methylthiotransferase RimO (438 aa).

The MTTase N-terminal domain maps to 5–115 (PRVGFVSLGC…VMSAVHTHLP (111 aa)). Residues Cys14, Cys50, Cys79, Cys146, Cys150, and Cys153 each coordinate [4Fe-4S] cluster. The region spanning 132–369 (LTPKHYAYLK…MAVQAEISAR (238 aa)) is the Radical SAM core domain. One can recognise a TRAM domain in the interval 372–438 (ERRVGQTLQV…SEHDLWGERR (67 aa)).

This sequence belongs to the methylthiotransferase family. RimO subfamily. It depends on [4Fe-4S] cluster as a cofactor.

It is found in the cytoplasm. It carries out the reaction L-aspartate(89)-[ribosomal protein uS12]-hydrogen + (sulfur carrier)-SH + AH2 + 2 S-adenosyl-L-methionine = 3-methylsulfanyl-L-aspartate(89)-[ribosomal protein uS12]-hydrogen + (sulfur carrier)-H + 5'-deoxyadenosine + L-methionine + A + S-adenosyl-L-homocysteine + 2 H(+). In terms of biological role, catalyzes the methylthiolation of an aspartic acid residue of ribosomal protein uS12. In Chromobacterium violaceum (strain ATCC 12472 / DSM 30191 / JCM 1249 / CCUG 213 / NBRC 12614 / NCIMB 9131 / NCTC 9757 / MK), this protein is Ribosomal protein uS12 methylthiotransferase RimO.